A 566-amino-acid chain; its full sequence is Putative lipase ATG15 (566 aa).

Over 1–17 (MGSKHKKNASKSLRAFS) the chain is Cytoplasmic. A helical; Signal-anchor for type II membrane protein transmembrane segment spans residues 18-38 (FIILSASIALVYIFNPVKLIF). At 39–566 (PSSIIRFHHG…CVEWGDEEDA (528 aa)) the chain is on the lumenal side. Residues Asn-264 and Asn-348 are each glycosylated (N-linked (GlcNAc...) asparagine). Ser-366 serves as the catalytic Charge relay system. Asn-483 is a glycosylation site (N-linked (GlcNAc...) asparagine). Residues 507-545 (DSLDDEPPLPNPLRPGKPSTTSSSQHHTSTTTTTETSRP) form a disordered region. Residues 522-543 (GKPSTTSSSQHHTSTTTTTETS) are compositionally biased toward low complexity.

Belongs to the AB hydrolase superfamily. Lipase family. Binds to both phosphatidylinositol (PI) and phosphatidylinositol 3,5-bisphosphate (PIP2).

The protein resides in the endosome. It localises to the multivesicular body membrane. It is found in the prevacuolar compartment membrane. It carries out the reaction a triacylglycerol + H2O = a diacylglycerol + a fatty acid + H(+). Lipase which is essential for lysis of subvacuolar cytoplasm to vacuole targeted bodies and intravacuolar autophagic bodies. Involved in the lysis of intravacuolar multivesicular body (MVB) vesicles. The intravacuolar membrane disintegration by ATG15 is critical to life span extension. This is Putative lipase ATG15 (ATG15) from Meyerozyma guilliermondii (strain ATCC 6260 / CBS 566 / DSM 6381 / JCM 1539 / NBRC 10279 / NRRL Y-324) (Yeast).